We begin with the raw amino-acid sequence, 289 residues long: 4-hydroxybenzoate octaprenyltransferase (289 aa).

9 helical membrane passes run 19-39 (IPIL…SHGL), 42-62 (ISYL…GCII), 85-105 (GQLS…VAFI), 107-127 (VLFL…LAIL), 134-154 (FFAI…FMAF), 165-185 (AWIF…IYAL), 211-231 (ILLF…YCDF), 233-253 (SFFY…YFLY), and 265-285 (FSAN…QYII).

Belongs to the UbiA prenyltransferase family. It depends on Mg(2+) as a cofactor.

The protein localises to the cell inner membrane. The enzyme catalyses all-trans-octaprenyl diphosphate + 4-hydroxybenzoate = 4-hydroxy-3-(all-trans-octaprenyl)benzoate + diphosphate. It participates in cofactor biosynthesis; ubiquinone biosynthesis. Catalyzes the prenylation of para-hydroxybenzoate (PHB) with an all-trans polyprenyl group. Mediates the second step in the final reaction sequence of ubiquinone-8 (UQ-8) biosynthesis, which is the condensation of the polyisoprenoid side chain with PHB, generating the first membrane-bound Q intermediate 3-octaprenyl-4-hydroxybenzoate. This is 4-hydroxybenzoate octaprenyltransferase from Francisella tularensis subsp. holarctica (strain FTNF002-00 / FTA).